The sequence spans 37 residues: Cytochrome b6-f complex subunit 5 (37 aa).

The chain crosses the membrane as a helical span at residues 5-25; that stretch reads LLCGIVLGLVPVTIAGLFVTA.

It belongs to the PetG family. The 4 large subunits of the cytochrome b6-f complex are cytochrome b6, subunit IV (17 kDa polypeptide, PetD), cytochrome f and the Rieske protein, while the 4 small subunits are PetG, PetL, PetM and PetN. The complex functions as a dimer.

Its subcellular location is the plastid. It localises to the chloroplast thylakoid membrane. Component of the cytochrome b6-f complex, which mediates electron transfer between photosystem II (PSII) and photosystem I (PSI), cyclic electron flow around PSI, and state transitions. PetG is required for either the stability or assembly of the cytochrome b6-f complex. This Chlamydomonas reinhardtii (Chlamydomonas smithii) protein is Cytochrome b6-f complex subunit 5.